Consider the following 2374-residue polypeptide: CCR4-NOT transcription complex subunit 1 (2374 aa).

4 short sequence motifs (LXXLL) span residues 153–157 (LPDLL), 181–185 (LHLLL), 223–227 (LAPLL), and 570–574 (LSMLL). A compositionally biased stretch (low complexity) spans 1009 to 1051 (LAQAQAQSQPPKAPQPGQASTLVTTATTTTTAAKTTTITRPTA). Residues 1009–1060 (LAQAQAQSQPPKAPQPGQASTLVTTATTTTTAAKTTTITRPTAVGPKKDVPP) are disordered. The interaction with CCR4-NOT complex catalytic subunits stretch occupies residues 1082–1604 (EPPENVQEKI…QPMKQQAWPT (523 aa)). 3 consecutive short sequence motifs (LXXLL) follow at residues 1638 to 1642 (IRSLL), 1940 to 1944 (LIALL), and 2094 to 2098 (LRVLL).

The protein belongs to the CNOT1 family. As to quaternary structure, component of the CCR4-NOT complex.

It localises to the cytoplasm. It is found in the nucleus. In terms of biological role, scaffolding component of the CCR4-NOT complex which is one of the major cellular mRNA deadenylases and is linked to various cellular processes including bulk mRNA degradation, miRNA-mediated repression, translational repression during translational initiation and general transcription regulation. Additional complex functions may be a consequence of its influence on mRNA expression. Its scaffolding function implies its interaction with the catalytic complex module and diverse RNA-binding proteins mediating the complex recruitment to selected mRNA 3'UTRs. Acts as a transcriptional repressor. Represses the ligand-dependent transcriptional activation by nuclear receptors. This Danio rerio (Zebrafish) protein is CCR4-NOT transcription complex subunit 1 (cnot1).